The chain runs to 62 residues: Large ribosomal subunit protein bL28 (62 aa).

This sequence belongs to the bacterial ribosomal protein bL28 family.

The polypeptide is Large ribosomal subunit protein bL28 (Streptococcus uberis (strain ATCC BAA-854 / 0140J)).